The following is a 314-amino-acid chain: Methionyl-tRNA formyltransferase (314 aa).

(6S)-5,6,7,8-tetrahydrofolate is bound at residue 112–115 (SLLP).

The protein belongs to the Fmt family.

It catalyses the reaction L-methionyl-tRNA(fMet) + (6R)-10-formyltetrahydrofolate = N-formyl-L-methionyl-tRNA(fMet) + (6S)-5,6,7,8-tetrahydrofolate + H(+). Attaches a formyl group to the free amino group of methionyl-tRNA(fMet). The formyl group appears to play a dual role in the initiator identity of N-formylmethionyl-tRNA by promoting its recognition by IF2 and preventing the misappropriation of this tRNA by the elongation apparatus. This Legionella pneumophila (strain Paris) protein is Methionyl-tRNA formyltransferase.